The chain runs to 431 residues: UDP-N-acetylmuramate--L-alanine ligase (431 aa).

Position 108 to 114 (108 to 114) interacts with ATP; it reads GSHGKTS.

This sequence belongs to the MurCDEF family.

It is found in the cytoplasm. The enzyme catalyses UDP-N-acetyl-alpha-D-muramate + L-alanine + ATP = UDP-N-acetyl-alpha-D-muramoyl-L-alanine + ADP + phosphate + H(+). Its pathway is cell wall biogenesis; peptidoglycan biosynthesis. In terms of biological role, cell wall formation. This Exiguobacterium sibiricum (strain DSM 17290 / CCUG 55495 / CIP 109462 / JCM 13490 / 255-15) protein is UDP-N-acetylmuramate--L-alanine ligase.